The chain runs to 211 residues: ATP phosphoribosyltransferase (211 aa).

The protein belongs to the ATP phosphoribosyltransferase family. Short subfamily. In terms of assembly, heteromultimer composed of HisG and HisZ subunits.

It localises to the cytoplasm. The catalysed reaction is 1-(5-phospho-beta-D-ribosyl)-ATP + diphosphate = 5-phospho-alpha-D-ribose 1-diphosphate + ATP. The protein operates within amino-acid biosynthesis; L-histidine biosynthesis; L-histidine from 5-phospho-alpha-D-ribose 1-diphosphate: step 1/9. Catalyzes the condensation of ATP and 5-phosphoribose 1-diphosphate to form N'-(5'-phosphoribosyl)-ATP (PR-ATP). Has a crucial role in the pathway because the rate of histidine biosynthesis seems to be controlled primarily by regulation of HisG enzymatic activity. The sequence is that of ATP phosphoribosyltransferase from Pseudomonas fluorescens (strain Pf0-1).